We begin with the raw amino-acid sequence, 600 residues long: UPF0588 membrane protein C20F10.02c (600 aa).

Helical transmembrane passes span 409–429 (LSAT…TSLV) and 437–457 (YHWL…SVLI).

The protein belongs to the UPF0588 family.

The protein localises to the membrane. This is UPF0588 membrane protein C20F10.02c from Schizosaccharomyces pombe (strain 972 / ATCC 24843) (Fission yeast).